Here is a 351-residue protein sequence, read N- to C-terminus: Cyanuric acid amidohydrolase (351 aa).

The interval 1-96 is RU A; that stretch reads MPSLRAHVFR…HWTVFARETV (96 aa). Residues Arg-53 and 77 to 78 each bind substrate; that span reads SG. Residues 103–240 are RU B; sequence ALAIGVSRTP…HEIIVLGMSA (138 aa). Lys-153 is a catalytic residue. Substrate-binding positions include Arg-185 and 223 to 224; that span reads SS. Ser-223 serves as the catalytic Nucleophile. Positions 246–351 are RU C; it reads LSIDHAVMRD…PVAIIVEKEQ (106 aa). Residue Glu-283 coordinates Mg(2+). Substrate-binding positions include Arg-310 and 329–330; that span reads SG. Positions 332, 335, 336, 337, and 340 each coordinate Mg(2+).

This sequence belongs to the cyclic amide hydrolase (CyAH) family. In terms of assembly, homotetramer.

It catalyses the reaction cyanurate + H2O = 1-carboxybiuret + H(+). The protein operates within xenobiotic degradation; atrazine degradation; biuret from cyanurate: step 1/1. Its activity is regulated as follows. Inhibited by barbituric acid. Its function is as follows. Responsible for the hydrolysis of cyanuric acid, an intermediate formed during catabolism of s-triazine based compounds in herbicides such as atrazine and polymers such as melamine. Catalyzes the hydrolytic opening of the s-triazine ring of cyanuric acid (2,4,6-trihydroxy-s-triazine) to yield carbon dioxide and carboxybiuret, which spontaneously decarboxylates to biuret. The polypeptide is Cyanuric acid amidohydrolase (Rhizobium johnstonii (strain DSM 114642 / LMG 32736 / 3841) (Rhizobium leguminosarum bv. viciae)).